Reading from the N-terminus, the 638-residue chain is Keratin, type II cytoskeletal 2 oral (638 aa).

The interval 1–182 (MNRQVCKKSF…DPQIGQVKAQ (182 aa)) is head. 2 positions are modified to omega-N-methylarginine: Arg-85 and Arg-110. Residues 183-218 (EREQIKTLNNKFASFIDKVRFLEQQNKVLETKWELL) are coil 1A. Positions 183–496 (EREQIKTLNN…KLLEGEECRM (314 aa)) constitute an IF rod domain. The linker 1 stretch occupies residues 219 to 237 (QQQTTGSGPSSLEPCFESY). The segment at 238-329 (ISFLCKQLDS…TLYEMELSQM (92 aa)) is coil 1B. A linker 12 region spans residues 330–353 (QSHASDTSVVLSMDNNRCLDLGSI). A coil 2 region spans residues 354–492 (IAEVRAQYEE…ATYRKLLEGE (139 aa)). A tail region spans residues 493–638 (ECRMSGECQS…TSSSQHSSTK (146 aa)). Positions 532–638 (SGSGGYKGGS…TSSSQHSSTK (107 aa)) are disordered. Residues 540-549 (GSSSSSSSGY) are compositionally biased toward low complexity. A compositionally biased stretch (gly residues) spans 550 to 572 (GVSGGSGSGYGGVSSGSTGGRGS). Low complexity predominate over residues 573–583 (SGSYQSSSSGS). Residue Arg-584 is modified to Omega-N-methylarginine. The span at 590 to 608 (SISVSHSGMGSSSGSIQTS) shows a compositional bias: low complexity. Residues 609–620 (GGSGYKSGGGGS) are compositionally biased toward gly residues. Over residues 626–638 (SQTTSSSQHSSTK) the composition is skewed to low complexity.

Belongs to the intermediate filament family. As to quaternary structure, heterotetramer of two type I and two type II keratins.

Probably contributes to terminal cornification. The protein is Keratin, type II cytoskeletal 2 oral (KRT76) of Homo sapiens (Human).